An 85-amino-acid polypeptide reads, in one-letter code: UPF0434 protein HNE_3545 (85 aa).

Belongs to the UPF0434 family.

The sequence is that of UPF0434 protein HNE_3545 from Hyphomonas neptunium (strain ATCC 15444).